Reading from the N-terminus, the 266-residue chain is Apolipoprotein A-I (266 aa).

The first 18 residues, 1–18, serve as a signal peptide directing secretion; sequence MKAVVLTLAVLFLTGSQA. 2 consecutive repeat copies span residues 67 to 88 and 89 to 110. The segment at 67–266 is 10 X approximate tandem repeats; sequence LKLLDNWDSL…EEASKKLNAQ (200 aa). M109 carries the methionine sulfoxide modification. A 3; half-length repeat occupies 111–121; sequence KDVEEMKTKVQ. 5 tandem repeats follow at residues 122–143, 144–165, 166–187, 188–209, and 210–231. A 9; half-length repeat occupies 232–242; the sequence is PALEDLRQGLL. Repeat 10 spans residues 243 to 266; it reads PVLESFKVSLLSALEEASKKLNAQ.

This sequence belongs to the apolipoprotein A1/A4/E family. Homodimer. Interacts with APOA1BP and CLU. Component of a sperm activating protein complex (SPAP), consisting of APOA1, an immunoglobulin heavy chain, an immunoglobulin light chain and albumin. Interacts with NDRG1. Interacts with SCGB3A2. Interacts with NAXE and YJEFN3. Post-translationally, glycosylated. In terms of processing, palmitoylated. Phosphorylation sites are present in the extracellular medium. As to expression, major protein of plasma HDL, also found in chylomicrons.

It localises to the secreted. Participates in the reverse transport of cholesterol from tissues to the liver for excretion by promoting cholesterol efflux from tissues and by acting as a cofactor for the lecithin cholesterol acyltransferase (LCAT). As part of the SPAP complex, activates spermatozoa motility. This chain is Apolipoprotein A-I (APOA1), found in Carlito syrichta (Philippine tarsier).